The following is a 154-amino-acid chain: Urease accessory protein UreE (154 aa).

The interval 134–154 is disordered; that stretch reads PESGAYGKSGHNHGHSHSHED. The span at 143 to 154 shows a compositional bias: basic residues; it reads GHNHGHSHSHED.

This sequence belongs to the UreE family.

The protein localises to the cytoplasm. Functionally, involved in urease metallocenter assembly. Binds nickel. Probably functions as a nickel donor during metallocenter assembly. The sequence is that of Urease accessory protein UreE from Alteromonas mediterranea (strain DSM 17117 / CIP 110805 / LMG 28347 / Deep ecotype).